A 704-amino-acid polypeptide reads, in one-letter code: Phosphatidylinositol-3,5-bisphosphate 3-phosphatase MTMR8 (704 aa).

The Myotubularin phosphatase domain occupies 126-500; the sequence is GWKLIDPISD…YNIQFWCGMY (375 aa). Asparagine 250, asparagine 275, and isoleucine 276 together coordinate a 1,2-diacyl-sn-glycero-3-phospho-(1D-myo-inositol-3,5-bisphosphate). 3 residues coordinate a 1,2-diacyl-sn-glycero-3-phospho-(1D-myo-inositol-3-phosphate): asparagine 250, asparagine 275, and isoleucine 276. The active-site Phosphocysteine intermediate is cysteine 338. A 1,2-diacyl-sn-glycero-3-phospho-(1D-myo-inositol-3,5-bisphosphate)-binding residues include serine 339, aspartate 340, glycine 341, tryptophan 342, aspartate 343, arginine 344, lysine 380, and arginine 384. Positions 339, 340, 341, 342, 343, and 344 each coordinate a 1,2-diacyl-sn-glycero-3-phospho-(1D-myo-inositol-3-phosphate). Phosphate-binding residues include serine 339 and aspartate 340. Phosphate is bound by residues tryptophan 342, aspartate 343, and arginine 344. Arginine 384 contacts a 1,2-diacyl-sn-glycero-3-phospho-(1D-myo-inositol-3-phosphate). Positions 515 to 541 form a coiled coil; that stretch reads ESLLEIKKQRAMLETDVHELEKKLKVR.

Belongs to the protein-tyrosine phosphatase family. Non-receptor class myotubularin subfamily. Homodimer. Heterodimer with MTMR9.

The protein localises to the nucleus envelope. The enzyme catalyses a 1,2-diacyl-sn-glycero-3-phospho-(1D-myo-inositol-3,5-bisphosphate) + H2O = a 1,2-diacyl-sn-glycero-3-phospho-(1D-myo-inositol-5-phosphate) + phosphate. It catalyses the reaction a 1,2-diacyl-sn-glycero-3-phospho-(1D-myo-inositol-3-phosphate) + H2O = a 1,2-diacyl-sn-glycero-3-phospho-(1D-myo-inositol) + phosphate. The catalysed reaction is 1,2-dioctanoyl-sn-glycero-3-phospho-(1D-myo-inositol-3,5-bisphosphate) + H2O = 1,2-dioctanoyl-sn-glycero-3-phospho-(1D-myo-inositol-5-phosphate) + phosphate. With respect to regulation, interaction with MTMR9 increases phosphatase activity. Its function is as follows. Lipid phosphatase that specifically dephosphorylates the D-3 position of phosphatidylinositol 3-phosphate and phosphatidylinositol 3,5-bisphosphate, generating phosphatidylinositol and phosphatidylinositol 5-phosphate. In complex with MTMR9, negatively regulates autophagy. The chain is Phosphatidylinositol-3,5-bisphosphate 3-phosphatase MTMR8 from Homo sapiens (Human).